A 366-amino-acid chain; its full sequence is Carbamoyl phosphate synthase small chain (366 aa).

Residues 1–168 (MYGILVLEDG…KETVIYNAED (168 aa)) form a CPSase region. Residues Ser45, Gly220, and Gly222 each coordinate L-glutamine. One can recognise a Glutamine amidotransferase type-1 domain in the interval 172-363 (RCVLIDCGVK…VELGIKFKAE (192 aa)). Residue Cys247 is the Nucleophile of the active site. Leu248, Gln251, Asn289, Gly291, and Phe292 together coordinate L-glutamine. Active-site residues include His336 and Glu338.

This sequence belongs to the CarA family. Composed of two chains; the small (or glutamine) chain promotes the hydrolysis of glutamine to ammonia, which is used by the large (or ammonia) chain to synthesize carbamoyl phosphate. Tetramer of heterodimers (alpha,beta)4.

It carries out the reaction hydrogencarbonate + L-glutamine + 2 ATP + H2O = carbamoyl phosphate + L-glutamate + 2 ADP + phosphate + 2 H(+). The enzyme catalyses L-glutamine + H2O = L-glutamate + NH4(+). It functions in the pathway amino-acid biosynthesis; L-arginine biosynthesis; carbamoyl phosphate from bicarbonate: step 1/1. The protein operates within pyrimidine metabolism; UMP biosynthesis via de novo pathway; (S)-dihydroorotate from bicarbonate: step 1/3. Small subunit of the glutamine-dependent carbamoyl phosphate synthetase (CPSase). CPSase catalyzes the formation of carbamoyl phosphate from the ammonia moiety of glutamine, carbonate, and phosphate donated by ATP, constituting the first step of 2 biosynthetic pathways, one leading to arginine and/or urea and the other to pyrimidine nucleotides. The small subunit (glutamine amidotransferase) binds and cleaves glutamine to supply the large subunit with the substrate ammonia. The protein is Carbamoyl phosphate synthase small chain of Methanococcus maripaludis (strain C5 / ATCC BAA-1333).